We begin with the raw amino-acid sequence, 314 residues long: Serine acetyltransferase 1, chloroplastic (314 aa).

The protein belongs to the transferase hexapeptide repeat family. As to quaternary structure, homomultimer. Interacts with OASA1 and CYP20-3. Component of the cysteine synthase complex (CSC) composed of two OAS-TL dimers and one SAT hexamer. Mostly expressed in leaves. Localized in cortex, trichomes and vascular tissues, particularly in phloem.

The protein resides in the plastid. It is found in the chloroplast. It localises to the cytoplasm. It catalyses the reaction L-serine + acetyl-CoA = O-acetyl-L-serine + CoA. Its pathway is amino-acid biosynthesis; L-cysteine biosynthesis; L-cysteine from L-serine: step 1/2. Its function is as follows. Serine acetyltransferase which catalyzes the formation of O-acetyl-L-serine from acetyl-CoA and L-serine. Also displays O-acetylserine (thio1)-lyase activity in vitro. May be involved in detoxification process by mediating the production of glutathione. This Arabidopsis thaliana (Mouse-ear cress) protein is Serine acetyltransferase 1, chloroplastic (SAT1).